The sequence spans 213 residues: Endonuclease III (213 aa).

The 20-residue stretch at 101 to 120 (LEELLKLPGVGRKTANIVLW) folds into the HhH domain. Cys-180, Cys-187, Cys-190, and Cys-196 together coordinate [4Fe-4S] cluster.

This sequence belongs to the Nth/MutY family. The cofactor is [4Fe-4S] cluster.

It catalyses the reaction 2'-deoxyribonucleotide-(2'-deoxyribose 5'-phosphate)-2'-deoxyribonucleotide-DNA = a 3'-end 2'-deoxyribonucleotide-(2,3-dehydro-2,3-deoxyribose 5'-phosphate)-DNA + a 5'-end 5'-phospho-2'-deoxyribonucleoside-DNA + H(+). DNA repair enzyme that has both DNA N-glycosylase activity and AP-lyase activity. The DNA N-glycosylase activity releases various damaged pyrimidines from DNA by cleaving the N-glycosidic bond, leaving an AP (apurinic/apyrimidinic) site. The AP-lyase activity cleaves the phosphodiester bond 3' to the AP site by a beta-elimination, leaving a 3'-terminal unsaturated sugar and a product with a terminal 5'-phosphate. The sequence is that of Endonuclease III from Thermotoga maritima (strain ATCC 43589 / DSM 3109 / JCM 10099 / NBRC 100826 / MSB8).